The primary structure comprises 1947 residues: DNA-directed RNA polymerase subunit beta' (1947 aa).

4 residues coordinate Zn(2+): Cys-119, Cys-121, Cys-141, and Cys-144. Positions 1778, 1780, and 1782 each coordinate Mg(2+).

The protein belongs to the RNA polymerase beta' chain family. RpoC1 subfamily. In plastids the minimal PEP RNA polymerase catalytic core is composed of four subunits: alpha, beta, beta', and beta''. When a (nuclear-encoded) sigma factor is associated with the core the holoenzyme is formed, which can initiate transcription. It depends on Mg(2+) as a cofactor. Zn(2+) is required as a cofactor.

It localises to the plastid. The protein resides in the chloroplast. The enzyme catalyses RNA(n) + a ribonucleoside 5'-triphosphate = RNA(n+1) + diphosphate. Its function is as follows. DNA-dependent RNA polymerase catalyzes the transcription of DNA into RNA using the four ribonucleoside triphosphates as substrates. The chain is DNA-directed RNA polymerase subunit beta' from Oedogonium cardiacum (Filamentous green alga).